Consider the following 1224-residue polypeptide: DNA-directed RNA polymerase subunit beta (1224 aa).

Belongs to the RNA polymerase beta chain family. The RNAP catalytic core consists of 2 alpha, 1 beta, 1 beta' and 1 omega subunit. When a sigma factor is associated with the core the holoenzyme is formed, which can initiate transcription.

The enzyme catalyses RNA(n) + a ribonucleoside 5'-triphosphate = RNA(n+1) + diphosphate. Its function is as follows. DNA-dependent RNA polymerase catalyzes the transcription of DNA into RNA using the four ribonucleoside triphosphates as substrates. The chain is DNA-directed RNA polymerase subunit beta from Pelotomaculum thermopropionicum (strain DSM 13744 / JCM 10971 / SI).